The following is a 263-amino-acid chain: tRNA (guanine-N(7)-)-methyltransferase (263 aa).

Residues 1–39 form a disordered region; it reads MVHHGQMHAQPGVGLRPDTPVASGQLPSTSIRSRRSGIS. S-adenosyl-L-methionine is bound by residues Glu-82, Asp-107, Asn-136, and Asp-159. Asp-159 is a catalytic residue. Residues Lys-163, Asp-195, and 232 to 235 each bind substrate; that span reads TKYE.

This sequence belongs to the class I-like SAM-binding methyltransferase superfamily. TrmB family.

It catalyses the reaction guanosine(46) in tRNA + S-adenosyl-L-methionine = N(7)-methylguanosine(46) in tRNA + S-adenosyl-L-homocysteine. It participates in tRNA modification; N(7)-methylguanine-tRNA biosynthesis. Its function is as follows. Catalyzes the formation of N(7)-methylguanine at position 46 (m7G46) in tRNA. This is tRNA (guanine-N(7)-)-methyltransferase from Mycobacterium bovis (strain ATCC BAA-935 / AF2122/97).